The primary structure comprises 190 residues: MAKANEIKRGMAVNLNGKLLLVKDIDVQSPSARGASTLYKMRFSDVRTGLKVEERFKGDENLDTITLTRRAVNFSYIDGDEYVFMDDEDYTPYNFKKEQIEDELLFIPEGGMPGMQVLTMEGQLLALELPQTVDMEIVDTAPSIKGASASARNKPAIMSTGLSIQVPEYISPGEKIRIHIAERRYMGRAD.

It belongs to the elongation factor P family.

In Yersinia pestis bv. Antiqua (strain Antiqua), this protein is Elongation factor P-like protein.